A 339-amino-acid chain; its full sequence is Dihydroorotate dehydrogenase (quinone) (339 aa).

FMN is bound by residues 62-66 (AGMDK) and threonine 86. Residue lysine 66 participates in substrate binding. 111–115 (NRMGF) serves as a coordination point for substrate. FMN contacts are provided by asparagine 139 and asparagine 172. Asparagine 172 contacts substrate. Residue serine 175 is the Nucleophile of the active site. Substrate is bound at residue asparagine 177. FMN contacts are provided by lysine 217 and threonine 245. 246–247 (NT) contributes to the substrate binding site. Residues glycine 268, glycine 297, and 318–319 (YS) each bind FMN.

This sequence belongs to the dihydroorotate dehydrogenase family. Type 2 subfamily. In terms of assembly, monomer. The cofactor is FMN.

It is found in the cell membrane. It catalyses the reaction (S)-dihydroorotate + a quinone = orotate + a quinol. The protein operates within pyrimidine metabolism; UMP biosynthesis via de novo pathway; orotate from (S)-dihydroorotate (quinone route): step 1/1. Functionally, catalyzes the conversion of dihydroorotate to orotate with quinone as electron acceptor. The chain is Dihydroorotate dehydrogenase (quinone) from Shewanella putrefaciens (strain CN-32 / ATCC BAA-453).